Here is a 351-residue protein sequence, read N- to C-terminus: Outer membrane porin protein 32 (351 aa).

Residues 1–19 (MKKSLIALAVLAASGAAMA) form the signal peptide. Gln20 carries the pyrrolidone carboxylic acid modification.

This sequence to bacterial outer membrane proteins and porins. As to quaternary structure, homotrimer.

The protein resides in the cell outer membrane. Functionally, forms anion selective channels. In Delftia acidovorans (Pseudomonas acidovorans), this protein is Outer membrane porin protein 32 (omp32).